Reading from the N-terminus, the 750-residue chain is Photosystem I P700 chlorophyll a apoprotein A1 (750 aa).

The next 8 membrane-spanning stretches (helical) occupy residues 70–93 (VFSAHFGQLAIILIWLSGMYFHGA), 156–179 (LYCTAIGALIFAGLMLFAGWFHYH), 195–219 (LNHHLAGLLGLGSLGWAGHQVHVSL), 291–309 (TAHHHLAIGVLFLVAGHMY), 346–369 (WHAQLALNLAMLGSLTIIVAHHMY), 385–411 (LSLFTHHMWIGGFLVVGAAAHAAIFMV), 433–455 (AIISHLNWVCIFLGFHSFGLYIH), and 531–549 (FLVHHIHAFTIHVTVLILL). C573 and C582 together coordinate [4Fe-4S] cluster. The next 2 helical transmembrane spans lie at 589–610 (HVFLGLFWMYNSISIVIFHFSW) and 664–686 (LSAYGLLFLGAHFVWAFSLMFLF). H675 lines the chlorophyll a' pocket. Residues M683 and Y691 each contribute to the chlorophyll a site. W692 serves as a coordination point for phylloquinone. Residues 724–744 (AVGVAHYLLGGIATTWAFFLA) traverse the membrane as a helical segment.

It belongs to the PsaA/PsaB family. As to quaternary structure, the PsaA/B heterodimer binds the P700 chlorophyll special pair and subsequent electron acceptors. PSI consists of a core antenna complex that captures photons, and an electron transfer chain that converts photonic excitation into a charge separation. The eukaryotic PSI reaction center is composed of at least 11 subunits. P700 is a chlorophyll a/chlorophyll a' dimer, A0 is one or more chlorophyll a, A1 is one or both phylloquinones and FX is a shared 4Fe-4S iron-sulfur center. serves as cofactor.

The protein localises to the plastid. Its subcellular location is the chloroplast thylakoid membrane. The enzyme catalyses reduced [plastocyanin] + hnu + oxidized [2Fe-2S]-[ferredoxin] = oxidized [plastocyanin] + reduced [2Fe-2S]-[ferredoxin]. PsaA and PsaB bind P700, the primary electron donor of photosystem I (PSI), as well as the electron acceptors A0, A1 and FX. PSI is a plastocyanin-ferredoxin oxidoreductase, converting photonic excitation into a charge separation, which transfers an electron from the donor P700 chlorophyll pair to the spectroscopically characterized acceptors A0, A1, FX, FA and FB in turn. Oxidized P700 is reduced on the lumenal side of the thylakoid membrane by plastocyanin. This is Photosystem I P700 chlorophyll a apoprotein A1 from Angiopteris evecta (Mule's foot fern).